The following is a 144-amino-acid chain: Maximins 4/H3 type 1 (144 aa).

Positions 1-18 (MNFKYIIAVSFFIASAYA) are cleaved as a signal peptide. The propeptide occupies 19 to 43 (RSEEKDVQSLSQRDVLEEESLREIR). Asparagine 70 is subject to Asparagine amide. The propeptide occupies 74 to 123 (TAEDHEVMKRLEAVMRDLDSLDHPEEASERETRGFNQEEIANLFTKKEKR). Isoleucine 143 is modified (isoleucine amide).

It belongs to the bombinin family. Expressed by the skin glands.

The protein resides in the secreted. In terms of biological role, maximin-4 shows antibacterial activity against both Gram-positive and Gram-negative bacteria. It also shows antimicrobial activity against the fungus C.albicans, but not against A.flavus nor P.uticale. It has little hemolytic activity. It does not possess a significant cytotoxicity against tumor cell lines. It does not possess a significant anti-HIV activity. Maximin-H3 shows antibacterial activity against both Gram-positive and Gram-negative bacteria. It also shows antimicrobial activity against the fungus C.albicans. Shows strong hemolytic activity. The sequence is that of Maximins 4/H3 type 1 from Bombina maxima (Giant fire-bellied toad).